The following is a 180-amino-acid chain: Large ribosomal subunit protein mL41 (180 aa).

Residues 1-21 (MKLVLVSTRGVRSLNSTNFPA) constitute a mitochondrion transit peptide.

Belongs to the mitochondrion-specific ribosomal protein mL41 family. As to quaternary structure, component of the mitochondrial ribosome large subunit (39S) which comprises a 16S rRNA and about 50 distinct proteins.

It is found in the mitochondrion. This Caenorhabditis elegans protein is Large ribosomal subunit protein mL41 (mrpl-41).